Here is a 220-residue protein sequence, read N- to C-terminus: Deoxyribose-phosphate aldolase 1 (220 aa).

D89 (proton donor/acceptor) is an active-site residue. K151 serves as the catalytic Schiff-base intermediate with acetaldehyde. Catalysis depends on K180, which acts as the Proton donor/acceptor.

The protein belongs to the DeoC/FbaB aldolase family. DeoC type 1 subfamily.

Its subcellular location is the cytoplasm. The enzyme catalyses 2-deoxy-D-ribose 5-phosphate = D-glyceraldehyde 3-phosphate + acetaldehyde. It functions in the pathway carbohydrate degradation; 2-deoxy-D-ribose 1-phosphate degradation; D-glyceraldehyde 3-phosphate and acetaldehyde from 2-deoxy-alpha-D-ribose 1-phosphate: step 2/2. Functionally, catalyzes a reversible aldol reaction between acetaldehyde and D-glyceraldehyde 3-phosphate to generate 2-deoxy-D-ribose 5-phosphate. In Staphylococcus aureus (strain MRSA252), this protein is Deoxyribose-phosphate aldolase 1.